The chain runs to 166 residues: Protein-export protein SecB (166 aa).

The protein belongs to the SecB family. In terms of assembly, homotetramer, a dimer of dimers. One homotetramer interacts with 1 SecA dimer.

Its subcellular location is the cytoplasm. Its function is as follows. One of the proteins required for the normal export of preproteins out of the cell cytoplasm. It is a molecular chaperone that binds to a subset of precursor proteins, maintaining them in a translocation-competent state. It also specifically binds to its receptor SecA. The protein is Protein-export protein SecB of Actinobacillus pleuropneumoniae serotype 5b (strain L20).